The primary structure comprises 186 residues: Tumor necrosis factor alpha-induced protein 8-like protein 1 (186 aa).

Belongs to the TNFAIP8 family. Interacts with FBXW5; TNFAIP8L1 competes with TSC2 to bind FBXW5 increasing TSC2 stability by preventing its ubiquitination. As to expression, high expression detected in most carcinoma cell lines, especially in cells transformed with virus genomes.

It localises to the cytoplasm. In terms of biological role, acts as a negative regulator of mTOR activity. The polypeptide is Tumor necrosis factor alpha-induced protein 8-like protein 1 (TNFAIP8L1) (Homo sapiens (Human)).